The primary structure comprises 267 residues: 3-methyl-2-oxobutanoate hydroxymethyltransferase (267 aa).

D42 and D86 together coordinate Mg(2+). Residues 42–43 (DS), D86, and K116 contribute to the 3-methyl-2-oxobutanoate site. E118 provides a ligand contact to Mg(2+). The Proton acceptor role is filled by E185.

The protein belongs to the PanB family. As to quaternary structure, homodecamer; pentamer of dimers. Requires Mg(2+) as cofactor.

The protein localises to the cytoplasm. The enzyme catalyses 3-methyl-2-oxobutanoate + (6R)-5,10-methylene-5,6,7,8-tetrahydrofolate + H2O = 2-dehydropantoate + (6S)-5,6,7,8-tetrahydrofolate. It participates in cofactor biosynthesis; (R)-pantothenate biosynthesis; (R)-pantoate from 3-methyl-2-oxobutanoate: step 1/2. Its function is as follows. Catalyzes the reversible reaction in which hydroxymethyl group from 5,10-methylenetetrahydrofolate is transferred onto alpha-ketoisovalerate to form ketopantoate. The protein is 3-methyl-2-oxobutanoate hydroxymethyltransferase of Parasynechococcus marenigrum (strain WH8102).